Reading from the N-terminus, the 339-residue chain is MGRIVVLYVDGAFGIGKTTVLRQIQKSAAYRFRRIYLEEPMRAWRSWFVDDHDAIREIYTTQELKDAGEIDLREASRRVCYAQVSLSAPFHIMNAVIYGIISGESEATSAHLGEGDYFVGVDRHPLASCLCFPVARFVTGYLEYTDLIALVATLPDYPRGASIAILDLSVEEQARRITERSRSGEHVNKTFLRILRNVFIIMYNTVAYLRNVSIDKACADREALEDFRGSQLESDMHKIDIQPRDDPNASETLFAVMASDATWRKNRKQSALFVYTMAKLDALLRSLNMHIVDINGLSQEQCAEKVVAISSKVPAVTARGNAPDLLFDAVEAYNADMGV.

Residue 11-18 (GAFGIGKT) participates in ATP binding. The active-site Proton acceptor is the Glu-39. Tyr-59 and Gln-83 together coordinate substrate. Arg-176 is a binding site for ATP. Arg-182 is a substrate binding site.

It belongs to the herpesviridae thymidine kinase family. Homodimer.

The enzyme catalyses thymidine + ATP = dTMP + ADP + H(+). Functionally, catalyzes the transfer of the gamma-phospho group of ATP to thymidine to generate dTMP in the salvage pathway of pyrimidine synthesis. The dTMP serves as a substrate for DNA polymerase during viral DNA replication. Allows the virus to be reactivated and to grow in non-proliferative cells lacking a high concentration of phosphorylated nucleic acid precursors. This chain is Thymidine kinase, found in Amazona oratrix (yellow-headed parrot).